The following is a 313-amino-acid chain: Myeloma-overexpressed gene protein (313 aa).

The tract at residues Glu107–Asp129 is disordered.

The polypeptide is Myeloma-overexpressed gene protein (MYEOV) (Homo sapiens (Human)).